Consider the following 512-residue polypeptide: Protein OS-9 homolog (512 aa).

The signal sequence occupies residues 1–17 (MRRFNLILLASLQLVGA). The segment at 71–91 (QAREADARDNEAENKDQDGPS) is disordered. Positions 73–88 (READARDNEAENKDQD) are enriched in basic and acidic residues. N118 carries an N-linked (GlcNAc...) asparagine glycan. In terms of domain architecture, MRH spans 149 to 288 (DSCLYFMSGW…VVNTPRLCND (140 aa)). C151 and C164 are oxidised to a cystine. Residues W158, W159, Q171, D242, R248, E270, and Y276 each coordinate a mannooligosaccharide derivative. Disulfide bonds link C241/C274 and C256/C286. Disordered stretches follow at residues 329 to 349 (QVPL…PRDV) and 485 to 512 (AAAK…KDEL). Over residues 492–504 (DDEEEVVEGSEEQ) the composition is skewed to acidic residues. A Prevents secretion from ER motif is present at residues 509-512 (KDEL).

Belongs to the OS-9 family. As to quaternary structure, interacts with missfolded ER lumenal proteins.

It is found in the endoplasmic reticulum membrane. Its function is as follows. Lectin involved in the quality control of the secretory pathway. As a member of the endoplasmic reticulum-associated degradation lumenal (ERAD-L) surveillance system, targets misfolded endoplasmic reticulum lumenal glycoproteins for degradation. In Gibberella zeae (strain ATCC MYA-4620 / CBS 123657 / FGSC 9075 / NRRL 31084 / PH-1) (Wheat head blight fungus), this protein is Protein OS-9 homolog (YOS1).